Here is a 2311-residue protein sequence, read N- to C-terminus: Proto-oncogene tyrosine-protein kinase ROS (2311 aa).

A signal peptide spans 1-24; that stretch reads MRNACLLLNRLGAFYFIWISAAYC. The Extracellular portion of the chain corresponds to 25 to 1873; the sequence is SFSKNCQDLC…LAKDTVTSPD (1849 aa). 34 N-linked (GlcNAc...) asparagine glycosylation sites follow: Asn-49, Asn-65, Asn-77, Asn-123, Asn-132, Asn-265, Asn-287, Asn-307, Asn-333, Asn-377, Asn-405, Asn-480, Asn-607, Asn-628, Asn-706, Asn-714, Asn-911, Asn-940, Asn-962, Asn-971, Asn-1110, Asn-1154, Asn-1180, Asn-1233, Asn-1255, Asn-1282, Asn-1316, Asn-1470, Asn-1509, Asn-1588, Asn-1628, Asn-1682, Asn-1696, and Asn-1730. 2 consecutive Fibronectin type-III domains span residues 110–202 and 203–294; these read KPGA…ASGV and PTTA…PESK. The Fibronectin type-III 3 domain occupies 571-671; sequence LPTLPRLVTV…EPFRGMTFEE (101 aa). 2 Fibronectin type-III domains span residues 952 to 1047 and 1051 to 1158; these read VPES…APEG and APAN…SSDI. 4 consecutive Fibronectin type-III domains span residues 1459–1569, 1570–1669, 1671–1766, and 1767–1868; these read DTEK…TLYG, VPEG…AKTF, TPLS…TTAG, and VPSK…AKDT. Residues 1754 to 1764 show a composition bias toward low complexity; it reads STSSPTSFKTT. Residues 1754-1786 form a disordered region; sequence STSSPTSFKTTAGVPSKPGTPKRAEDSKNSVQW. A compositionally biased stretch (basic and acidic residues) spans 1775–1786; that stretch reads KRAEDSKNSVQW. N-linked (GlcNAc...) asparagine glycosylation is found at Asn-1792, Asn-1795, and Asn-1822. A helical membrane pass occupies residues 1874–1898; it reads ITAIVAVIGAVVLGLTIIILFGFVW. The Cytoplasmic portion of the chain corresponds to 1899-2311; the sequence is HQRWKSRKPA…SISSAELTSV (413 aa). In terms of domain architecture, Protein kinase spans 1961–2240; the sequence is LNLHKLLGSG…KLQEIRHSPL (280 aa). Residues 1967–1975 and Lys-1996 each bind ATP; that span reads LGSGAFGEV. The Proton acceptor role is filled by Asp-2095. Phosphotyrosine; by autocatalysis is present on Tyr-2131.

It belongs to the protein kinase superfamily. Tyr protein kinase family. Insulin receptor subfamily. As to quaternary structure, interacts with VAV3; constitutive interaction mediating VAV3 phosphorylation. As to expression, highest expression in kidney. Also expressed in gonad, thymus, bursa, brain and kidney.

The protein resides in the cell membrane. The enzyme catalyses L-tyrosyl-[protein] + ATP = O-phospho-L-tyrosyl-[protein] + ADP + H(+). Orphan receptor tyrosine kinase (RTK) that may activate several downstream signaling pathways related to cell differentiation, proliferation, growth and survival including the PI3 kinase-mTOR signaling pathway. Mediates the phosphorylation of PTPN11, an activator of this pathway. May also phosphorylate and activate the transcription factor STAT3 to control anchorage-independent cell growth. Mediates the phosphorylation and the activation of VAV3, a guanine nucleotide exchange factor regulating cell morphology. May activate other downstream signaling proteins including AKT1, MAPK1, MAPK3, IRS1, and PLCG2. In Gallus gallus (Chicken), this protein is Proto-oncogene tyrosine-protein kinase ROS (ROS1).